A 504-amino-acid polypeptide reads, in one-letter code: Histidine ammonia-lyase (504 aa).

Positions 142 to 144 (ASG) form a cross-link, 5-imidazolinone (Ala-Gly). S143 carries the post-translational modification 2,3-didehydroalanine (Ser).

The protein belongs to the PAL/histidase family. Contains an active site 4-methylidene-imidazol-5-one (MIO), which is formed autocatalytically by cyclization and dehydration of residues Ala-Ser-Gly.

It is found in the cytoplasm. The catalysed reaction is L-histidine = trans-urocanate + NH4(+). The protein operates within amino-acid degradation; L-histidine degradation into L-glutamate; N-formimidoyl-L-glutamate from L-histidine: step 1/3. The protein is Histidine ammonia-lyase of Staphylococcus aureus (strain USA300).